A 712-amino-acid polypeptide reads, in one-letter code: Ribosomal RNA large subunit methyltransferase K/L (712 aa).

A THUMP domain is found at 43–154; the sequence is LAYRITLWTR…NGQLTISMNF (112 aa).

Belongs to the methyltransferase superfamily. RlmKL family.

Its subcellular location is the cytoplasm. The catalysed reaction is guanosine(2445) in 23S rRNA + S-adenosyl-L-methionine = N(2)-methylguanosine(2445) in 23S rRNA + S-adenosyl-L-homocysteine + H(+). It catalyses the reaction guanosine(2069) in 23S rRNA + S-adenosyl-L-methionine = N(2)-methylguanosine(2069) in 23S rRNA + S-adenosyl-L-homocysteine + H(+). Its function is as follows. Specifically methylates the guanine in position 2445 (m2G2445) and the guanine in position 2069 (m7G2069) of 23S rRNA. The protein is Ribosomal RNA large subunit methyltransferase K/L of Shewanella frigidimarina (strain NCIMB 400).